The primary structure comprises 255 residues: Ribonuclease HII (255 aa).

Residues 72-255 (RLIAGVDEVG…KTFAPVQSFR (184 aa)) form the RNase H type-2 domain. D78, E79, and D170 together coordinate a divalent metal cation.

Belongs to the RNase HII family. The cofactor is Mn(2+). Mg(2+) serves as cofactor.

The protein resides in the cytoplasm. It carries out the reaction Endonucleolytic cleavage to 5'-phosphomonoester.. In terms of biological role, endonuclease that specifically degrades the RNA of RNA-DNA hybrids. The polypeptide is Ribonuclease HII (rnhB) (Bacillus subtilis (strain 168)).